A 250-amino-acid polypeptide reads, in one-letter code: DNA repair protein RecO (250 aa).

It belongs to the RecO family.

Its function is as follows. Involved in DNA repair and RecF pathway recombination. In Staphylococcus aureus (strain MW2), this protein is DNA repair protein RecO.